A 63-amino-acid polypeptide reads, in one-letter code: DNA-directed RNA polymerase 7 kDa subunit (63 aa).

It belongs to the poxviridae DNA-directed RNA polymerase 7 kDa subunit family. As to quaternary structure, the DNA-dependent RNA polymerase (vRNAP) consists of eight subunits encoded by early viral genes and termed according to their apparent molecular masses Rpo147, Rpo132, Rpo35, Rpo30, Rpo22, Rpo19, Rpo18, and Rpo7. The same holoenzyme, with the addition of the transcription-specificity factor RAP94, is used for early gene expression.

It is found in the virion. It catalyses the reaction RNA(n) + a ribonucleoside 5'-triphosphate = RNA(n+1) + diphosphate. Part of the DNA-dependent RNA polymerase which catalyzes the transcription of viral DNA into RNA using the four ribonucleoside triphosphates as substrates. Responsible for the transcription of early, intermediate and late genes. DNA-dependent RNA polymerase associates with the early transcription factor (ETF), itself composed of OPG118 and OPG134, thereby allowing the early genes transcription. Late transcription, and probably also intermediate transcription, require newly synthesized RNA polymerase. In Homo sapiens (Human), this protein is DNA-directed RNA polymerase 7 kDa subunit (OPG090).